The chain runs to 258 residues: Protein IMPACT homolog (258 aa).

The RWD domain occupies 10 to 114; sequence EELEAVEAIY…TELDGVLYVE (105 aa). A Glycyl lysine isopeptide (Lys-Gly) (interchain with G-Cter in ubiquitin) cross-link involves residue Lys-187.

Belongs to the IMPACT family. Interacts (via N-terminus) with GCN1 (via C-terminus); this interaction reduces the GCN1-GCN20 complex formation and prevents the interaction of GCN1 with GCN2 protein kinase and GCN2 activation in amino acid-starved cells. Interacts (via C-terminus) with ACT1; this interaction occurs in a GCN1-independent manner. Interacts with RPL39; this interaction occurs in a GCN1-independent manner. Associates (via middle region) with ribosomes; this association occurs in a GCN1-independent manner and persists under amino acid starvation conditions.

It localises to the cytoplasm. The protein localises to the nucleus. Its function is as follows. Translational regulator that ensures constant high levels of translation under amino acid starvation. Plays a role as a negative regulator of the GCN2 kinase activity; impairs GCN1-mediated GCN2 activation, and hence GCN2-mediated eIF-2-alpha phosphorylation in amino acid-starved cells and subsequent down-regulation of protein synthesis. In normal conditions, it resides in a actin complex and has no activity. This is Protein IMPACT homolog (YIH1) from Saccharomyces cerevisiae (strain ATCC 204508 / S288c) (Baker's yeast).